We begin with the raw amino-acid sequence, 406 residues long: Methylthioribose-1-phosphate isomerase (406 aa).

Aspartate 277 (proton donor) is an active-site residue.

It belongs to the eIF-2B alpha/beta/delta subunits family. MtnA subfamily.

It is found in the cytoplasm. Its subcellular location is the nucleus. The enzyme catalyses 5-(methylsulfanyl)-alpha-D-ribose 1-phosphate = 5-(methylsulfanyl)-D-ribulose 1-phosphate. It functions in the pathway amino-acid biosynthesis; L-methionine biosynthesis via salvage pathway; L-methionine from S-methyl-5-thio-alpha-D-ribose 1-phosphate: step 1/6. Functionally, catalyzes the interconversion of methylthioribose-1-phosphate (MTR-1-P) into methylthioribulose-1-phosphate (MTRu-1-P). The chain is Methylthioribose-1-phosphate isomerase from Debaryomyces hansenii (strain ATCC 36239 / CBS 767 / BCRC 21394 / JCM 1990 / NBRC 0083 / IGC 2968) (Yeast).